Here is a 272-residue protein sequence, read N- to C-terminus: Undecaprenyl-diphosphatase (272 aa).

7 helical membrane-spanning segments follow: residues 42-62 (FGLS…VVFF), 92-112 (YLVL…EDFF), 120-140 (WVVV…EAVG), 149-169 (MGFA…VPGV), 194-214 (FLMS…EVLA), 224-244 (MFAV…RFFI), and 252-272 (LRAF…LLLL).

It belongs to the UppP family.

It localises to the cell membrane. It carries out the reaction di-trans,octa-cis-undecaprenyl diphosphate + H2O = di-trans,octa-cis-undecaprenyl phosphate + phosphate + H(+). In terms of biological role, catalyzes the dephosphorylation of undecaprenyl diphosphate (UPP). Confers resistance to bacitracin. This is Undecaprenyl-diphosphatase from Rubrobacter xylanophilus (strain DSM 9941 / JCM 11954 / NBRC 16129 / PRD-1).